The sequence spans 304 residues: Tyrosine recombinase XerD (304 aa).

The region spanning 6–91 (EPWRKTLETF…AIRSFHKFLL (86 aa)) is the Core-binding (CB) domain. Residues 112–298 (YLPSVLTIEE…DRSFIKEVHK (187 aa)) enclose the Tyr recombinase domain. Active-site residues include arginine 155, lysine 179, histidine 250, arginine 253, and histidine 276. Tyrosine 285 (O-(3'-phospho-DNA)-tyrosine intermediate) is an active-site residue.

This sequence belongs to the 'phage' integrase family. XerD subfamily. As to quaternary structure, forms a cyclic heterotetrameric complex composed of two molecules of XerC and two molecules of XerD.

The protein localises to the cytoplasm. In terms of biological role, site-specific tyrosine recombinase, which acts by catalyzing the cutting and rejoining of the recombining DNA molecules. The XerC-XerD complex is essential to convert dimers of the bacterial chromosome into monomers to permit their segregation at cell division. It also contributes to the segregational stability of plasmids. The protein is Tyrosine recombinase XerD of Chlorobaculum tepidum (strain ATCC 49652 / DSM 12025 / NBRC 103806 / TLS) (Chlorobium tepidum).